A 1054-amino-acid polypeptide reads, in one-letter code: Leucine-rich repeats and immunoglobulin-like domains protein 2 (1054 aa).

Positions 1-39 are cleaved as a signal peptide; the sequence is MAAAPRGIWEQRRLGCGLGPLARLLILAQALRLLPAARA. The LRRNT domain occupies 40-74; sequence GLCPAPCACRLPLLDCSRRKLPAPSWRALSGPLPS. LRR repeat units follow at residues 75–96, 97–118, 120–141, 144–165, 167–188, 192–213, 215–236, 239–260, 263–284, 287–308, 311–332, 335–356, 359–381, 386–407, and 410–431; these read DISSLDLSHNRLSNWNNTLESQ, TLQEVKMNYNELTEIPYFGEPT, NITLLSLVHNLIPEINAEAFEL, ALESLDLSSNIISEIKTSSFPR, SLKYLNLSNNRISTLEAGCFDN, SLLVVKLNRNRISMIPPKVFKL, HLQFLELKRNRIKIVEGLTFQG, SLRSLKMQRNGISKLKDGAFFG, NMEELELEHNNLTGVNKGWLYG, MLQQLYMSQNAIEKISPDAWEF, RLSELDLSYNQLTRLDESAFVG, LLERLNLGDNRVTHIADGVFRF, NLQTLDLRNNDISWAIEDASEAF, SLTKLILQGNRIKSVTQKAFIG, and SLEYLDLNNNAIMSIQENAFSQ. An N-linked (GlcNAc...) asparagine glycan is attached at Asn-90. A glycan (N-linked (GlcNAc...) asparagine) is linked at Asn-120. 2 N-linked (GlcNAc...) asparagine glycosylation sites follow: Asn-172 and Asn-188. Asn-273 carries an N-linked (GlcNAc...) asparagine glycan. Asn-440, Asn-467, Asn-513, Asn-570, and Asn-588 each carry an N-linked (GlcNAc...) asparagine glycan. Residues 442 to 493 form the LRRCT domain; that stretch reads SSLLCDCHLKWLLQWLVDNNFHHSVNVSCAHPEWLAGQSILNVDLKDFVCDD. 3 consecutive Ig-like C2-type domains span residues 497–596, 601–690, and 695–784; these read PQIR…AKLT, PSFL…ASLT, and PSFI…NVIS. Cys-518 and Cys-579 are joined by a disulfide. A disulfide bridge connects residues Cys-622 and Cys-674. Residues Asn-686 and Asn-727 are each glycosylated (N-linked (GlcNAc...) asparagine). A disulfide bridge links Cys-716 with Cys-765. A helical transmembrane segment spans residues 807–827; that stretch reads IVIIVVVCCVVGTSLIWVIVI. Phosphotyrosine is present on Tyr-905. The N-linked (GlcNAc...) asparagine glycan is linked to Asn-1024.

It localises to the cell membrane. Its subcellular location is the cytoplasm. This chain is Leucine-rich repeats and immunoglobulin-like domains protein 2 (Lrig2), found in Mus musculus (Mouse).